The chain runs to 743 residues: 1,4-alpha-glucan branching enzyme GlgB (743 aa).

The active-site Nucleophile is D423. The Proton donor role is filled by E476.

Belongs to the glycosyl hydrolase 13 family. GlgB subfamily. Monomer.

The catalysed reaction is Transfers a segment of a (1-&gt;4)-alpha-D-glucan chain to a primary hydroxy group in a similar glucan chain.. It participates in glycan biosynthesis; glycogen biosynthesis. Its function is as follows. Catalyzes the formation of the alpha-1,6-glucosidic linkages in glycogen by scission of a 1,4-alpha-linked oligosaccharide from growing alpha-1,4-glucan chains and the subsequent attachment of the oligosaccharide to the alpha-1,6 position. The polypeptide is 1,4-alpha-glucan branching enzyme GlgB (Pseudomonas fluorescens (strain ATCC BAA-477 / NRRL B-23932 / Pf-5)).